Consider the following 228-residue polypeptide: Ribulose-phosphate 3-epimerase-like protein 1 (228 aa).

Serine 10 is a binding site for substrate. Residues histidine 35, aspartate 37, and histidine 70 each contribute to the a divalent metal cation site. Aspartate 37 serves as the catalytic Proton acceptor. Residues histidine 70, glycine 146–glutamate 149, aspartate 175–glycine 177, and glycine 197–serine 198 contribute to the substrate site. Aspartate 175 provides a ligand contact to a divalent metal cation. Aspartate 175 acts as the Proton donor in catalysis.

It belongs to the ribulose-phosphate 3-epimerase family. In terms of assembly, homodimer. Fe(2+) is required as a cofactor. Requires Mn(2+) as cofactor. Zn(2+) serves as cofactor. It depends on Co(2+) as a cofactor.

It catalyses the reaction D-ribulose 5-phosphate = D-xylulose 5-phosphate. It participates in carbohydrate degradation. Functionally, catalyzes the reversible epimerization of D-ribulose 5-phosphate to D-xylulose 5-phosphate. The chain is Ribulose-phosphate 3-epimerase-like protein 1 (RPEL1) from Homo sapiens (Human).